The sequence spans 239 residues: Vesicle-associated protein 1-3 (239 aa).

M1 bears the N-acetylmethionine mark. Position 2 is an N-acetylthreonine; in Vesicle-associated protein 1-3, N-terminally processed (T2). At 2–215 (TTGDLVNIHP…RKETSKKQSG (214 aa)) the chain is on the cytoplasmic side. In terms of domain architecture, MSP spans 6–127 (LVNIHPTELK…EDFKLRVVYI (122 aa)). S133 and S164 each carry phosphoserine. Positions 179–214 (SMISKLTEEKTSATQQSQKLRLELEMLRKETSKKQS) form a coiled coil. The chain crosses the membrane as a helical; Anchor for type IV membrane protein span at residues 216–236 (GHSLLLMLLVGLLGCVIGYLL).

This sequence belongs to the VAMP-associated protein (VAP) (TC 9.B.17) family.

Its subcellular location is the endoplasmic reticulum membrane. May play a role in vesicle trafficking. The sequence is that of Vesicle-associated protein 1-3 (PVA13) from Arabidopsis thaliana (Mouse-ear cress).